Consider the following 318-residue polypeptide: Aspartate carbamoyltransferase catalytic subunit (318 aa).

Carbamoyl phosphate contacts are provided by Arg66 and Thr67. An L-aspartate-binding site is contributed by Lys94. Positions 116, 144, and 147 each coordinate carbamoyl phosphate. L-aspartate is bound by residues Arg177 and Arg231. Carbamoyl phosphate-binding residues include Gly272 and Pro273.

This sequence belongs to the aspartate/ornithine carbamoyltransferase superfamily. ATCase family. Heterododecamer (2C3:3R2) of six catalytic PyrB chains organized as two trimers (C3), and six regulatory PyrI chains organized as three dimers (R2).

The enzyme catalyses carbamoyl phosphate + L-aspartate = N-carbamoyl-L-aspartate + phosphate + H(+). Its pathway is pyrimidine metabolism; UMP biosynthesis via de novo pathway; (S)-dihydroorotate from bicarbonate: step 2/3. In terms of biological role, catalyzes the condensation of carbamoyl phosphate and aspartate to form carbamoyl aspartate and inorganic phosphate, the committed step in the de novo pyrimidine nucleotide biosynthesis pathway. The chain is Aspartate carbamoyltransferase catalytic subunit from Frankia casuarinae (strain DSM 45818 / CECT 9043 / HFP020203 / CcI3).